The primary structure comprises 182 residues: Peptide deformylase (182 aa).

The Fe cation site is built by Cys-110 and His-153. The active site involves Glu-154. Fe cation is bound at residue His-157.

Belongs to the polypeptide deformylase family. It depends on Fe(2+) as a cofactor.

It catalyses the reaction N-terminal N-formyl-L-methionyl-[peptide] + H2O = N-terminal L-methionyl-[peptide] + formate. In terms of biological role, removes the formyl group from the N-terminal Met of newly synthesized proteins. Requires at least a dipeptide for an efficient rate of reaction. N-terminal L-methionine is a prerequisite for activity but the enzyme has broad specificity at other positions. In Halalkalibacterium halodurans (strain ATCC BAA-125 / DSM 18197 / FERM 7344 / JCM 9153 / C-125) (Bacillus halodurans), this protein is Peptide deformylase.